We begin with the raw amino-acid sequence, 163 residues long: 2-C-methyl-D-erythritol 2,4-cyclodiphosphate synthase (163 aa).

The a divalent metal cation site is built by Asp-12 and His-14. Residues 12–14 (DVH) and 38–39 (HS) each bind 4-CDP-2-C-methyl-D-erythritol 2-phosphate. An a divalent metal cation-binding site is contributed by His-46. 4-CDP-2-C-methyl-D-erythritol 2-phosphate-binding positions include 60–62 (DIG), 136–139 (TTSE), Phe-143, and Arg-146.

The protein belongs to the IspF family. In terms of assembly, homotrimer. Requires a divalent metal cation as cofactor.

The enzyme catalyses 4-CDP-2-C-methyl-D-erythritol 2-phosphate = 2-C-methyl-D-erythritol 2,4-cyclic diphosphate + CMP. The protein operates within isoprenoid biosynthesis; isopentenyl diphosphate biosynthesis via DXP pathway; isopentenyl diphosphate from 1-deoxy-D-xylulose 5-phosphate: step 4/6. Functionally, involved in the biosynthesis of isopentenyl diphosphate (IPP) and dimethylallyl diphosphate (DMAPP), two major building blocks of isoprenoid compounds. Catalyzes the conversion of 4-diphosphocytidyl-2-C-methyl-D-erythritol 2-phosphate (CDP-ME2P) to 2-C-methyl-D-erythritol 2,4-cyclodiphosphate (ME-CPP) with a corresponding release of cytidine 5-monophosphate (CMP). In Xanthomonas campestris pv. campestris (strain 8004), this protein is 2-C-methyl-D-erythritol 2,4-cyclodiphosphate synthase.